The sequence spans 180 residues: UPF0227 protein YcfP (180 aa).

Belongs to the UPF0227 family.

In Salmonella agona (strain SL483), this protein is UPF0227 protein YcfP.